The primary structure comprises 52 residues: Lantibiotic gallidermin (52 aa).

A propeptide spanning residues 1-30 (MEAVKEKNELFDLDVKVNAKESNDSGAEPR) is cleaved from the precursor. The lanthionine (Ser-Cys) cross-link spans 33 to 37 (SKFLC). The beta-methyllanthionine (Thr-Cys) cross-link spans 38–41 (TPGC). Thr-44 bears the (Z)-2,3-didehydrobutyrine mark. A cross-link (lanthionine (Ser-Cys)) is located at residues 46–51 (SFNSYC). A cross-link (S-(2-aminovinyl)-D-cysteine (Ser-Cys)) is located at residues 49–52 (SYCC).

Belongs to the type A lantibiotic family. Maturation of lantibiotics involves the enzymatic conversion of Thr, and Ser into dehydrated AA and the formation of thioether bonds with cysteine. The C-terminal lanthionine undergoes decarboxylation. This is followed by membrane translocation and cleavage of the modified precursor. Post-translationally, the structure of the 2,3-didehydrobutyrine is not discussed in PubMed:1932575. However, in Fig. 5 the NMR model appears to have the Z-isomer.

In terms of biological role, lanthionine-containing peptide antibiotic (lantibiotic) active on Gram-positive bacteria. The bactericidal activity of lantibiotics is based on depolarization of energized bacterial cytoplasmic membranes, initiated by the formation of aqueous transmembrane pores. This is Lantibiotic gallidermin (gdmA) from Staphylococcus gallinarum.